A 226-amino-acid chain; its full sequence is Large ribosomal subunit protein uL1 (226 aa).

It belongs to the universal ribosomal protein uL1 family. In terms of assembly, part of the 50S ribosomal subunit.

In terms of biological role, binds directly to 23S rRNA. The L1 stalk is quite mobile in the ribosome, and is involved in E site tRNA release. Its function is as follows. Protein L1 is also a translational repressor protein, it controls the translation of the L11 operon by binding to its mRNA. The protein is Large ribosomal subunit protein uL1 of Borrelia garinii subsp. bavariensis (strain ATCC BAA-2496 / DSM 23469 / PBi) (Borreliella bavariensis).